The sequence spans 274 residues: S-adenosylmethionine decarboxylase proenzyme (274 aa).

Catalysis depends on Ser119, which acts as the Schiff-base intermediate with substrate; via pyruvic acid. A Pyruvic acid (Ser); by autocatalysis modification is found at Ser119. The active-site Proton acceptor; for processing activity is the His124. The Proton donor; for catalytic activity role is filled by Cys147.

The protein belongs to the prokaryotic AdoMetDC family. Type 2 subfamily. As to quaternary structure, heterooctamer of four alpha and four beta chains arranged as a tetramer of alpha/beta heterodimers. The cofactor is pyruvate. In terms of processing, is synthesized initially as an inactive proenzyme. Formation of the active enzyme involves a self-maturation process in which the active site pyruvoyl group is generated from an internal serine residue via an autocatalytic post-translational modification. Two non-identical subunits are generated from the proenzyme in this reaction, and the pyruvate is formed at the N-terminus of the alpha chain, which is derived from the carboxyl end of the proenzyme. The post-translation cleavage follows an unusual pathway, termed non-hydrolytic serinolysis, in which the side chain hydroxyl group of the serine supplies its oxygen atom to form the C-terminus of the beta chain, while the remainder of the serine residue undergoes an oxidative deamination to produce ammonia and the pyruvoyl group blocking the N-terminus of the alpha chain.

It carries out the reaction S-adenosyl-L-methionine + H(+) = S-adenosyl 3-(methylsulfanyl)propylamine + CO2. It functions in the pathway amine and polyamine biosynthesis; S-adenosylmethioninamine biosynthesis; S-adenosylmethioninamine from S-adenosyl-L-methionine: step 1/1. Catalyzes the decarboxylation of S-adenosylmethionine to S-adenosylmethioninamine (dcAdoMet), the propylamine donor required for the synthesis of the polyamines spermine and spermidine from the diamine putrescine. The chain is S-adenosylmethionine decarboxylase proenzyme from Clostridium acetobutylicum (strain ATCC 824 / DSM 792 / JCM 1419 / IAM 19013 / LMG 5710 / NBRC 13948 / NRRL B-527 / VKM B-1787 / 2291 / W).